The chain runs to 306 residues: Cytochrome P450 monooxygenase aclO (306 aa).

Position 237 (C237) interacts with heme.

The protein belongs to the cytochrome P450 family. The cofactor is heme.

The protein operates within mycotoxin biosynthesis. In terms of biological role, cytochrome P450 monooxygenase; part of the gene cluster that mediates the biosynthesis of aspirochlorine (or antibiotic A30641), an unusual halogenated spiro compound with distinctive antifungal properties due to selective inhibition of protein biosynthesis, and which is also active against bacteria, viruses, and murine tumor cells. The non-ribosomal peptide synthetase (NRPS) aclP is responsible the formation of the diketopiperazine (DKP) core from the condensation of 2 phenylalanine residues. One Phe residue is tailored into chlorotyrosine by hydroxylation and chlorination, whereas the second Phe undergoes an unprecedented C-C bond cleavage to be converted into glycine. After formation of the DKP, sulfur is incorporated into the DKP by conjugation with glutathione by aclG, followed by its stepwise degradation to the thiol by aclI, aclJ and aclK, and the dithiol oxidation by aclT. In addition, oxygenases (aclB, aclC, aclL and aclO) and O-methyltransferases (aclM and aclU) act as tailoring enzymes to produce the intermediate dechloroaspirochlorine. Ultimately, chlorination of dechloroaspirochlorine by the halogenase aclH is the last step in the aspirochlorine pathway. In Aspergillus oryzae (strain ATCC 42149 / RIB 40) (Yellow koji mold), this protein is Cytochrome P450 monooxygenase aclO.